Here is a 114-residue protein sequence, read N- to C-terminus: Ribosome-binding factor A (114 aa).

The protein belongs to the RbfA family. Monomer. Binds 30S ribosomal subunits, but not 50S ribosomal subunits or 70S ribosomes.

The protein localises to the cytoplasm. In terms of biological role, one of several proteins that assist in the late maturation steps of the functional core of the 30S ribosomal subunit. Associates with free 30S ribosomal subunits (but not with 30S subunits that are part of 70S ribosomes or polysomes). Required for efficient processing of 16S rRNA. May interact with the 5'-terminal helix region of 16S rRNA. This is Ribosome-binding factor A from Vesicomyosocius okutanii subsp. Calyptogena okutanii (strain HA).